The sequence spans 250 residues: TBC1 domain family member 26 (250 aa).

Residues 101 to 250 form the Rab-GAP TBC domain; it reads VIPLAVRGRA…RCCTSPSQRS (150 aa).

In terms of biological role, may act as a GTPase-activating protein for Rab family protein(s). This Homo sapiens (Human) protein is TBC1 domain family member 26 (TBC1D26).